Here is a 126-residue protein sequence, read N- to C-terminus: Holo-[acyl-carrier-protein] synthase (126 aa).

2 residues coordinate Mg(2+): D9 and E58.

Belongs to the P-Pant transferase superfamily. AcpS family. As to quaternary structure, homodimer. Requires Mg(2+) as cofactor.

It localises to the cytoplasm. The catalysed reaction is apo-[ACP] + CoA = holo-[ACP] + adenosine 3',5'-bisphosphate + H(+). In terms of biological role, transfers the 4'-phosphopantetheine moiety from coenzyme A to the 'Ser-36' of acyl-carrier-protein. In Escherichia coli O157:H7, this protein is Holo-[acyl-carrier-protein] synthase.